The chain runs to 319 residues: G-protein coupled receptor 55 (319 aa).

Residues 1–21 are Extracellular-facing; the sequence is MSQQNTSGDCLFDGVNELMKT. The N-linked (GlcNAc...) asparagine glycan is linked to N5. The chain crosses the membrane as a helical span at residues 22–42; the sequence is LQFAVHIPTFVLGLLLNLLAI. Residues 43-58 lie on the Cytoplasmic side of the membrane; that stretch reads HGFSTFLKNRWPDYAA. Residues 59–79 traverse the membrane as a helical segment; it reads TSIYMINLAVFDLLLVLSLPF. Residues 80–94 are Extracellular-facing; that stretch reads KMVLSQVQSPFPSLC. Residues 95-115 traverse the membrane as a helical segment; sequence TLVECLYFVSMYGSVFTICFI. The Cytoplasmic segment spans residues 116 to 137; sequence SMDRFLAIRYPLLVSHLRSPRK. The helical transmembrane segment at 138–158 threads the bilayer; sequence IFGICCTIWVLVWTGSIPIYS. Over 159-180 the chain is Extracellular; the sequence is FHGKVEKYMCFHNMSDDTWSAK. N171 is a glycosylation site (N-linked (GlcNAc...) asparagine). The chain crosses the membrane as a helical span at residues 181–201; it reads VFFPLEVFGFLLPMGIMGFCC. The Cytoplasmic portion of the chain corresponds to 202 to 231; that stretch reads SRSIHILLGRRDHTQDWVQQKACIYSIAAS. A helical transmembrane segment spans residues 232-252; sequence LAVFVVSFLPVHLGFFLQFLV. Topologically, residues 253–271 are extracellular; it reads RNSFIVECRAKQSISFFLQ. The helical transmembrane segment at 272-292 threads the bilayer; that stretch reads LSMCFSNVNCCLDVFCYYFVI. The Cytoplasmic portion of the chain corresponds to 293–319; it reads KEFRMNIRAHRPSRVQLVLQDTTISRG.

This sequence belongs to the G-protein coupled receptor 1 family. As to expression, expressed in the caudate nucleus and putamen, but not detected in the hippocampus, thalamus, pons cerebellum, frontal cortex of the brain or in the liver. Expressed in osteoclasts and osteoblasts. Higly expressed in macrophages and B-cells.

It localises to the cell membrane. In terms of biological role, G-protein coupled receptor that binds to several ligands including 2-arachidonoyl lysophosphatidylinositol or lysophosphatidylglucoside with high affinity, leading to rapid and transient activation of numerous intracellular signaling pathways. Induces the Ca(2+) release from intracellular stores via ERK, the heterotrimeric G protein GNA13 and RHOA leading to morphological changes including cell rounding and stress fiber formation. In macrophages, acts downstream of lysophosphatidylglucoside to inhibit the translocation of the phospholipid-transporting ABCA1 to plasma membrane and subsequent cholesterol efflux leading to lipid accumulation and foam cell formation. The protein is G-protein coupled receptor 55 (GPR55) of Homo sapiens (Human).